The sequence spans 257 residues: Putative hydro-lyase Bcep18194_B2576 (257 aa).

Belongs to the D-glutamate cyclase family.

The chain is Putative hydro-lyase Bcep18194_B2576 from Burkholderia lata (strain ATCC 17760 / DSM 23089 / LMG 22485 / NCIMB 9086 / R18194 / 383).